Reading from the N-terminus, the 137-residue chain is MAYCRQEGKDRIIFVTKEDHETPSNAELVADDPNDPYEEHGLILPNGDINWNCPCLGGMASGPCGEQFKAAFSCFHYSKEDVKGSDCVDQFRAMQECMQKYPDLYPQEEEEEEEQPADPLPEAASEASATKEAAASS.

Disulfide bonds link Cys-53-Cys-55, Cys-64-Cys-97, and Cys-74-Cys-87. Positions 61 to 105 (SGPCGEQFKAAFSCFHYSKEDVKGSDCVDQFRAMQECMQKYPDLY) constitute a CHCH domain. 2 consecutive short sequence motifs (cx9C motif) follow at residues 64–74 (CGEQFKAAFSC) and 87–97 (CVDQFRAMQEC). The disordered stretch occupies residues 102–137 (PDLYPQEEEEEEEQPADPLPEAASEASATKEAAASS). Over residues 106-116 (PQEEEEEEEQP) the composition is skewed to acidic residues. Residues 120–137 (LPEAASEASATKEAAASS) show a composition bias toward low complexity.

In terms of assembly, monomer. Can form homooligomers. Interacts with GFER and forms transient disulfide bonds with GFER. Interacts with MICU1. Interacts with COX19 forming transient intermolecular disulfide bridges. Interacts with COA7 through transient intermolecular disulfide bonds. Interacts with AIFM1; the interaction increases in presence of NADH. Interacts with NDUFB10. Forms intrachain disulfide bridges, but exists in different redox states.

It localises to the mitochondrion intermembrane space. Central component of a redox-sensitive mitochondrial intermembrane space import machinery which is required for the biogenesis of respiratory chain complexes. Functions as a chaperone and catalyzes the formation of disulfide bonds in substrate proteins, such as COX17, COX19, MICU1 and COA7. Required for the import and folding of small cysteine-containing proteins (small Tim) in the mitochondrial intermembrane space (IMS). Required for the import of COA7 in the IMS. Precursor proteins to be imported into the IMS are translocated in their reduced form into the mitochondria. The oxidized form of CHCHD4/MIA40 forms a transient intermolecular disulfide bridge with the reduced precursor protein, resulting in oxidation of the precursor protein that now contains an intramolecular disulfide bond and is able to undergo folding in the IMS. Reduced CHCHD4/MIA40 is then reoxidized by GFER/ERV1 via a disulfide relay system. Mediates formation of disulfide bond in MICU1 in the IMS, promoting formation of the MICU1-MICU2 heterodimer that regulates mitochondrial calcium uptake. The sequence is that of Mitochondrial intermembrane space import and assembly protein 40 (CHCHD4) from Bos taurus (Bovine).